We begin with the raw amino-acid sequence, 232 residues long: Large ribosomal subunit protein uL1 (232 aa).

Belongs to the universal ribosomal protein uL1 family. In terms of assembly, part of the 50S ribosomal subunit.

Functionally, binds directly to 23S rRNA. The L1 stalk is quite mobile in the ribosome, and is involved in E site tRNA release. Protein L1 is also a translational repressor protein, it controls the translation of the L11 operon by binding to its mRNA. The polypeptide is Large ribosomal subunit protein uL1 (Thermosipho melanesiensis (strain DSM 12029 / CIP 104789 / BI429)).